The following is a 394-amino-acid chain: Methane monooxygenase component A beta chain (394 aa).

In terms of assembly, m.trichosporium has two forms of methane monooxygenase, a soluble and a membrane-bound type. The soluble type consists of four components (A to D): protein A, comprising three chains, in an alpha-2, beta-2, gamma-2 configuration, is a nonheme iron protein containing an unusual mu-hydroxo bridge structure at its active site and interacts with both oxygen and methane.

It carries out the reaction methane + NADH + O2 + H(+) = methanol + NAD(+) + H2O. The catalysed reaction is methane + NADPH + O2 + H(+) = methanol + NADP(+) + H2O. Responsible for the initial oxygenation of methane to methanol in methanotrophs. It also catalyzes the monohydroxylation of a variety of unactivated alkenes, alicyclic, aromatic and heterocyclic compounds. The protein is Methane monooxygenase component A beta chain (mmoY) of Methylosinus trichosporium.